The sequence spans 156 residues: Ecotin (156 aa).

The signal sequence occupies residues methionine 1–alanine 19. Cysteine 65 and cysteine 102 form a disulfide bridge.

It belongs to the protease inhibitor I11 (ecotin) family. In terms of assembly, homodimer.

It is found in the periplasm. General inhibitor of family S1 serine proteases. In Pseudomonas aeruginosa (strain LESB58), this protein is Ecotin.